The chain runs to 103 residues: SOSS complex subunit C (103 aa).

This sequence belongs to the SOSS-C family. Belongs to the multiprotein complex Integrator. Component of the SOSS complex, composed of SOSS-B (SOSS-B1/NABP2 or SOSS-B2/NABP1), SOSS-A/INTS3 and SOSS-C/INIP.

Its subcellular location is the nucleus. Its function is as follows. Component of the SOSS complex, a multiprotein complex that functions downstream of the MRN complex to promote DNA repair and G2/M checkpoint. The SOSS complex associates with single-stranded DNA at DNA lesions and influences diverse endpoints in the cellular DNA damage response including cell-cycle checkpoint activation, recombinational repair and maintenance of genomic stability. Required for efficient homologous recombination-dependent repair of double-strand breaks (DSBs). The polypeptide is SOSS complex subunit C (INIP) (Gallus gallus (Chicken)).